A 321-amino-acid chain; its full sequence is Anthranilate phosphoribosyltransferase (321 aa).

5-phospho-alpha-D-ribose 1-diphosphate is bound by residues G72, 75–76 (GD), T80, 82–85 (NVST), 99–107 (KHGNVSITS), and S111. Anthranilate is bound at residue G72. Position 84 (S84) interacts with Mg(2+). Anthranilate is bound at residue N102. R157 is an anthranilate binding site. Residues D216 and E217 each coordinate Mg(2+).

This sequence belongs to the anthranilate phosphoribosyltransferase family. In terms of assembly, homodimer. Requires Mg(2+) as cofactor.

It carries out the reaction N-(5-phospho-beta-D-ribosyl)anthranilate + diphosphate = 5-phospho-alpha-D-ribose 1-diphosphate + anthranilate. It functions in the pathway amino-acid biosynthesis; L-tryptophan biosynthesis; L-tryptophan from chorismate: step 2/5. Functionally, catalyzes the transfer of the phosphoribosyl group of 5-phosphorylribose-1-pyrophosphate (PRPP) to anthranilate to yield N-(5'-phosphoribosyl)-anthranilate (PRA). This Methanococcus maripaludis (strain C6 / ATCC BAA-1332) protein is Anthranilate phosphoribosyltransferase.